Reading from the N-terminus, the 351-residue chain is Glycerol-3-phosphate dehydrogenase [NAD(P)+] (351 aa).

The NADPH site is built by Ser18, Trp19, Arg38, and Lys122. Positions 122, 153, and 155 each coordinate sn-glycerol 3-phosphate. Ala157 serves as a coordination point for NADPH. Positions 208, 261, 271, 272, and 273 each coordinate sn-glycerol 3-phosphate. Lys208 serves as the catalytic Proton acceptor. Arg272 contacts NADPH. Position 297 (Glu297) interacts with NADPH.

Belongs to the NAD-dependent glycerol-3-phosphate dehydrogenase family.

Its subcellular location is the cytoplasm. The catalysed reaction is sn-glycerol 3-phosphate + NAD(+) = dihydroxyacetone phosphate + NADH + H(+). The enzyme catalyses sn-glycerol 3-phosphate + NADP(+) = dihydroxyacetone phosphate + NADPH + H(+). It participates in membrane lipid metabolism; glycerophospholipid metabolism. Functionally, catalyzes the reduction of the glycolytic intermediate dihydroxyacetone phosphate (DHAP) to sn-glycerol 3-phosphate (G3P), the key precursor for phospholipid synthesis. The chain is Glycerol-3-phosphate dehydrogenase [NAD(P)+] from Bordetella pertussis (strain Tohama I / ATCC BAA-589 / NCTC 13251).